The primary structure comprises 608 residues: Glutamine--fructose-6-phosphate aminotransferase [isomerizing] (608 aa).

The active-site Nucleophile; for GATase activity is the C2. The region spanning 2 to 217 (CGIVGILGRG…DGDWAVLTRA (216 aa)) is the Glutamine amidotransferase type-2 domain. SIS domains follow at residues 284–423 (LPFD…ERGK) and 456–598 (LARY…VDQP). K603 acts as the For Fru-6P isomerization activity in catalysis.

The protein localises to the cytoplasm. The catalysed reaction is D-fructose 6-phosphate + L-glutamine = D-glucosamine 6-phosphate + L-glutamate. Its function is as follows. Involved in the production of the root hair deformation (HAD) factor specifically on soybean. This chain is Glutamine--fructose-6-phosphate aminotransferase [isomerizing] (nodM), found in Bradyrhizobium diazoefficiens (strain JCM 10833 / BCRC 13528 / IAM 13628 / NBRC 14792 / USDA 110).